A 547-amino-acid polypeptide reads, in one-letter code: Cytochrome P450 78A1 (547 aa).

Low complexity predominate over residues 84-94; it reads ASSRCPGAAAP. The disordered stretch occupies residues 84–104; it reads ASSRCPGAAAPRPRRDGPRRR. A heme-binding site is contributed by Cys-490.

This sequence belongs to the cytochrome P450 family. It depends on heme as a cofactor. In terms of tissue distribution, shoot apex.

The sequence is that of Cytochrome P450 78A1 (CYP78A1) from Zea mays (Maize).